We begin with the raw amino-acid sequence, 660 residues long: Methionine--tRNA ligase 1 (660 aa).

A 'HIGH' region motif is present at residues Tyr-15 to His-25. The 'KMSKS' region signature appears at Lys-310–Ser-314. Position 313 (Lys-313) interacts with ATP. Residues Asp-560–Lys-660 enclose the tRNA-binding domain.

The protein belongs to the class-I aminoacyl-tRNA synthetase family. MetG type 2B subfamily. In terms of assembly, homodimer.

The protein resides in the cytoplasm. It carries out the reaction tRNA(Met) + L-methionine + ATP = L-methionyl-tRNA(Met) + AMP + diphosphate. Is required not only for elongation of protein synthesis but also for the initiation of all mRNA translation through initiator tRNA(fMet) aminoacylation. In Bacillus anthracis, this protein is Methionine--tRNA ligase 1.